The sequence spans 217 residues: Probable nicotinate-nucleotide adenylyltransferase (217 aa).

The protein belongs to the NadD family.

It carries out the reaction nicotinate beta-D-ribonucleotide + ATP + H(+) = deamido-NAD(+) + diphosphate. The protein operates within cofactor biosynthesis; NAD(+) biosynthesis; deamido-NAD(+) from nicotinate D-ribonucleotide: step 1/1. Catalyzes the reversible adenylation of nicotinate mononucleotide (NaMN) to nicotinic acid adenine dinucleotide (NaAD). The chain is Probable nicotinate-nucleotide adenylyltransferase from Baumannia cicadellinicola subsp. Homalodisca coagulata.